Here is a 196-residue protein sequence, read N- to C-terminus: Holliday junction branch migration complex subunit RuvA (196 aa).

The tract at residues 1–63 (MINKIYGKVI…ENELKLFGFL (63 aa)) is domain I. Positions 64–139 (NSDERETFKS…KLLINNELES (76 aa)) are domain II. A region of interest (flexible linker) is located at residue S139. Residues 139–196 (SSLFRFKELEESIVSMGFDRKIVNSKLKEAFNLVEFSNLKDSEKEQFLFKEVLKRMSN) form a domain III region.

This sequence belongs to the RuvA family. In terms of assembly, homotetramer. Forms an RuvA(8)-RuvB(12)-Holliday junction (HJ) complex. HJ DNA is sandwiched between 2 RuvA tetramers; dsDNA enters through RuvA and exits via RuvB. An RuvB hexamer assembles on each DNA strand where it exits the tetramer. Each RuvB hexamer is contacted by two RuvA subunits (via domain III) on 2 adjacent RuvB subunits; this complex drives branch migration. In the full resolvosome a probable DNA-RuvA(4)-RuvB(12)-RuvC(2) complex forms which resolves the HJ.

The protein localises to the cytoplasm. In terms of biological role, the RuvA-RuvB-RuvC complex processes Holliday junction (HJ) DNA during genetic recombination and DNA repair, while the RuvA-RuvB complex plays an important role in the rescue of blocked DNA replication forks via replication fork reversal (RFR). RuvA specifically binds to HJ cruciform DNA, conferring on it an open structure. The RuvB hexamer acts as an ATP-dependent pump, pulling dsDNA into and through the RuvAB complex. HJ branch migration allows RuvC to scan DNA until it finds its consensus sequence, where it cleaves and resolves the cruciform DNA. The polypeptide is Holliday junction branch migration complex subunit RuvA (Borreliella afzelii (strain PKo) (Borrelia afzelii)).